Here is a 259-residue protein sequence, read N- to C-terminus: MQNLLKIGKYELGSRLIVGSGKYKDFQTTKEATLASGSELITVAVRRLNITDPNKENLRDTFKGTNVKFLPNSAGCVTAEEAITTFRLTREATGIDLIKLEVIGDTQKTLYPDVIETIKACQILSKEGFIIMAYTSDDPIMAKRLEDAGAHAIMPLAAPIGSGLGIQNPYNIVFIREAVNLPVIVDAGIGCASDAAYAMELGADGVLTNTAIAGAQNPMMMAEAMKHAVIAGRMSYLSGRIQKRPYATASSPINGMIQF.

Lysine 99 acts as the Schiff-base intermediate with DXP in catalysis. Residues glycine 161, 187–188, and 209–210 contribute to the 1-deoxy-D-xylulose 5-phosphate site; these read AG and NT.

Belongs to the ThiG family. Homotetramer. Forms heterodimers with either ThiH or ThiS.

The protein resides in the cytoplasm. It catalyses the reaction [ThiS sulfur-carrier protein]-C-terminal-Gly-aminoethanethioate + 2-iminoacetate + 1-deoxy-D-xylulose 5-phosphate = [ThiS sulfur-carrier protein]-C-terminal Gly-Gly + 2-[(2R,5Z)-2-carboxy-4-methylthiazol-5(2H)-ylidene]ethyl phosphate + 2 H2O + H(+). Its pathway is cofactor biosynthesis; thiamine diphosphate biosynthesis. Catalyzes the rearrangement of 1-deoxy-D-xylulose 5-phosphate (DXP) to produce the thiazole phosphate moiety of thiamine. Sulfur is provided by the thiocarboxylate moiety of the carrier protein ThiS. In vitro, sulfur can be provided by H(2)S. This chain is Thiazole synthase, found in Sulfurimonas denitrificans (strain ATCC 33889 / DSM 1251) (Thiomicrospira denitrificans (strain ATCC 33889 / DSM 1251)).